The primary structure comprises 1026 residues: Multidrug resistance protein MdtC (1026 aa).

10 helical membrane passes run 12–34, 336–353, 360–382, 431–450, 463–485, 525–547, 853–875, 895–917, 948–970, and 985–1007; these read VATL…LLPV, QSLI…FLFL, AIPA…LCGF, VGFT…LPLL, FAVT…TPML, HARW…YISI, LLLI…ESYV, LEWF…IGIV, LLRF…PLVL, and TIVG…VYLF.

This sequence belongs to the resistance-nodulation-cell division (RND) (TC 2.A.6) family. MdtC subfamily. Part of a tripartite efflux system composed of MdtA, MdtB and MdtC. MdtC forms a heteromultimer with MdtB.

The protein localises to the cell inner membrane. The polypeptide is Multidrug resistance protein MdtC (Pectobacterium atrosepticum (strain SCRI 1043 / ATCC BAA-672) (Erwinia carotovora subsp. atroseptica)).